The sequence spans 242 residues: ATP synthase subunit a (242 aa).

The next 6 membrane-spanning stretches (helical) occupy residues 29–49 (SAAY…LAFS), 84–104 (FVPV…FGMI), 114–134 (IIIT…VGFV), 140–160 (FLSL…MIII), 189–209 (VIAS…IPLM), and 210–230 (VILI…FTIL).

This sequence belongs to the ATPase A chain family. F-type ATPases have 2 components, CF(1) - the catalytic core - and CF(0) - the membrane proton channel. CF(1) has five subunits: alpha(3), beta(3), gamma(1), delta(1), epsilon(1). CF(0) has three main subunits: a(1), b(2) and c(9-12). The alpha and beta chains form an alternating ring which encloses part of the gamma chain. CF(1) is attached to CF(0) by a central stalk formed by the gamma and epsilon chains, while a peripheral stalk is formed by the delta and b chains.

It localises to the cell inner membrane. Its function is as follows. Key component of the proton channel; it plays a direct role in the translocation of protons across the membrane. The protein is ATP synthase subunit a of Rickettsia bellii (strain OSU 85-389).